Reading from the N-terminus, the 426-residue chain is Histone-binding protein RBBP7 (426 aa).

The residue at position 2 (alanine 2) is an N-acetylalanine. Residue serine 3 is modified to Phosphoserine. Lysine 4 is modified (N6-acetyllysine; alternate). Residue lysine 4 forms a Glycyl lysine isopeptide (Lys-Gly) (interchain with G-Cter in SUMO2); alternate linkage. A Glycyl lysine isopeptide (Lys-Gly) (interchain with G-Cter in ubiquitin); alternate cross-link involves residue lysine 4. Threonine 10 bears the Phosphothreonine mark. WD repeat units lie at residues 47–122, 128–173, 181–217, 228–269, 275–312, 318–370, and 377–404; these read QWLP…KINH, RARY…LRLR, GLSW…KIVD, VVED…HLVD, VNCL…LHTF, EIFQ…LFIH, and ISDF…IWQM. Position 95 is a phosphoserine (serine 95). Lysine 101 participates in a covalent cross-link: Glycyl lysine isopeptide (Lys-Gly) (interchain with G-Cter in SUMO2). N6-acetyllysine is present on lysine 119. Lysine 155 participates in a covalent cross-link: Glycyl lysine isopeptide (Lys-Gly) (interchain with G-Cter in SUMO2). Residue lysine 159 is modified to N6-acetyllysine; alternate. Lysine 159 is covalently cross-linked (Glycyl lysine isopeptide (Lys-Gly) (interchain with G-Cter in SUMO2); alternate). Serine 355 carries the post-translational modification Phosphoserine.

It belongs to the WD repeat RBAP46/RBAP48/MSI1 family. As to quaternary structure, binds directly to helix 1 of the histone fold of histone H4, a region that is not accessible when H4 is in chromatin. Subunit of the type B histone acetyltransferase (HAT) complex, composed of RBBP7 and HAT1. Subunit of the core histone deacetylase (HDAC) complex, which is composed of HDAC1, HDAC2, RBBP4 and RBBP7. The core HDAC complex associates with SIN3A, ARID4B/SAP180, SAP18, SAP30, SAP130, SUDS3/SAP45 and possibly ARID4A/RBP1 and ING1 to form the SIN3 HDAC complex. Component of the nucleosome remodeling and deacetylase (NuRD) repressor complex, composed of core proteins MTA1, MTA2, MTA3, RBBP4, RBBP7, HDAC1, HDAC2, MBD2, MBD3, and peripherally associated proteins CDK2AP1, CDK2AP2, GATAD2A, GATAD2B, CHD3, CHD4 and CHD5. The exact stoichiometry of the NuRD complex is unknown, and some subunits such as MBD2 and MBD3, GATAD2A and GATAD2B, and CHD3, CHD4 and CHD5 define mutually exclusive NuRD complexes. The NuRD complex may interact with MBD3L1. The NuRD complex may interact with MBD3L2. Subunit of the PRC2/EED-EZH2 complex, which is composed of at least EED, EZH2, RBBP4, RBBP7 and SUZ12. The PRC2/EED-EZH2 complex may also associate with HDAC1. Component of the NURF-1 ISWI chromatin remodeling complex (also called the nucleosome-remodeling factor (NURF) complex) at least composed of SMARCA1, BPTF, RBBP4 and RBBP7. Within the complex interacts with SMARCA1. Component of the BPFT-SMARCA1 complex at least composed of SMARCA1, BPFT, RBBP4 and RBBP7; the complex is catalytically inactive and does not remodel chromatin. Within the complex interacts with SMARCA1. Interacts with BRCA1. Interacts with CDK2AP1. Interacts with CENPA. Interacts with CHD3. Interacts with CHD4. Interacts with CREBBP, and this interaction may be enhanced by the binding of phosphorylated CREB1 to CREBBP. Interacts with HDAC7. Interacts with MTA1. Interacts with PWWP2B. Interacts with RB1 (via viral protein-binding domain). Interacts with SUV39H1.

It is found in the nucleus. In terms of biological role, core histone-binding subunit that may target chromatin remodeling factors, histone acetyltransferases and histone deacetylases to their histone substrates in a manner that is regulated by nucleosomal DNA. Component of several complexes which regulate chromatin metabolism. These include the type B histone acetyltransferase (HAT) complex, which is required for chromatin assembly following DNA replication; the core histone deacetylase (HDAC) complex, which promotes histone deacetylation and consequent transcriptional repression; the nucleosome remodeling and histone deacetylase complex (the NuRD complex), which promotes transcriptional repression by histone deacetylation and nucleosome remodeling; and the PRC2/EED-EZH2 complex, which promotes repression of homeotic genes during development; and the NURF (nucleosome remodeling factor) complex. The chain is Histone-binding protein RBBP7 (RBBP7) from Pongo abelii (Sumatran orangutan).